We begin with the raw amino-acid sequence, 471 residues long: Probable nucleoredoxin 3 (471 aa).

Thioredoxin domains are found at residues 15–173 (VSIP…ARRQ) and 179–334 (QLLG…KERD).

The protein belongs to the nucleoredoxin family.

The catalysed reaction is [protein]-dithiol + NAD(+) = [protein]-disulfide + NADH + H(+). The enzyme catalyses [protein]-dithiol + NADP(+) = [protein]-disulfide + NADPH + H(+). Its function is as follows. Probable thiol-disulfide oxidoreductase that may participate in various redox reactions. The polypeptide is Probable nucleoredoxin 3 (Oryza sativa subsp. japonica (Rice)).